The following is a 365-amino-acid chain: Pre-small/secreted glycoprotein (365 aa).

A signal peptide spans 1–32 (MGASGILQLPRERFRKTSFFVWVIILFHKVFS). N-linked (GlcNAc...) asparagine; by host glycosylation is present at Asn-40. 2 disulfides stabilise this stretch: Cys-108–Cys-135 and Cys-121–Cys-147. N-linked (GlcNAc...) asparagine; by host glycans are attached at residues Asn-204, Asn-228, Asn-257, and Asn-268.

The protein belongs to the filoviruses glycoprotein family. In terms of assembly, homodimer; disulfide-linked. The homodimers are linked by two disulfide bonds in a parallel orientation. As to quaternary structure, monomer. This precursor is processed into mature sGP and delta-peptide by host furin or furin-like proteases. The cleavage site corresponds to the furin optimal cleavage sequence [KR]-X-[KR]-R. Post-translationally, N-glycosylated. In terms of processing, O-glycosylated.

It localises to the secreted. Its function is as follows. Seems to possess an anti-inflammatory activity as it can reverse the barrier-decreasing effects of TNF alpha. Might therefore contribute to the lack of inflammatory reaction seen during infection in spite the of extensive necrosis and massive virus production. Does not seem to be involved in activation of primary macrophages. Does not seem to interact specifically with neutrophils. In terms of biological role, viroporin that permeabilizes mammalian cell plasma membranes. It acts by altering permeation of ionic compounds and small molecules. This activity may lead to viral enterotoxic activity. This chain is Pre-small/secreted glycoprotein (GP), found in Epomops franqueti (Franquet's epauletted fruit bat).